The primary structure comprises 428 residues: Ammonium transporter AmtB (428 aa).

An N-terminal signal peptide occupies residues Met-1–Ala-22. Residues Ala-23 to Asn-32 lie on the Periplasmic side of the membrane. Residues Ala-33–Tyr-54 form a helical membrane-spanning segment. Topologically, residues Gly-55–Ser-65 are cytoplasmic. A helical membrane pass occupies residues Met-66–Phe-90. Residues Gly-91 to Gln-119 are Periplasmic-facing. The chain crosses the membrane as a helical span at residues Tyr-120–Ala-142. Residues Glu-143–Arg-146 lie on the Cytoplasmic side of the membrane. The helical transmembrane segment at Phe-147 to Gly-171 threads the bilayer. The Periplasmic portion of the chain corresponds to Gly-172–Gly-185. The chain crosses the membrane as a helical span at residues Gly-186 to Ala-201. Topologically, residues Tyr-202–Pro-221 are cytoplasmic. Residues Met-222–Ser-241 form a helical membrane-spanning segment. NH4(+) is bound at residue Ser-241. The Periplasmic portion of the chain corresponds to Ala-242–Ile-248. Residues Ala-249 to Ala-273 traverse the membrane as a helical segment. Residues Leu-274–Ser-279 lie on the Cytoplasmic side of the membrane. A helical membrane pass occupies residues Leu-280–Tyr-300. Over Ile-301–Gly-302 the chain is Periplasmic. Residues Val-303 to Val-321 traverse the membrane as a helical segment. At Thr-322 to Pro-333 the chain is on the cytoplasmic side. Residues Cys-334–Ala-355 form a helical membrane-spanning segment. Over Ala-356–Met-370 the chain is Periplasmic. A helical transmembrane segment spans residues Gly-371–Ala-399. Residues Asp-400–Ala-428 are Cytoplasmic-facing.

The protein belongs to the ammonia transporter channel (TC 1.A.11.2) family. Homotrimer. In response to elevation of the extracellular ammonium concentration, interacts and forms a complex with GlnK.

The protein resides in the cell inner membrane. In the presence of high extracellular ammonium concentrations, transport activity is inhibited by interaction with the regulatory protein GlnK. Formation of the GlnK-AmtB complex is influenced by intracellular pools of the effector molecules ATP, ADP, Mg(2+) and 2-oxoglutarate. The GlnK-AmtB interaction is also controlled by the level of intracellular glutamine and the uridylylation status of GlnK. Functionally, involved in the uptake of ammonium/ammonia (NH(4)(+)/NH(3)). Transport is electrogenic. Following sequestration of NH(4)(+) at the periplasmic face, NH(4)(+) is deprotonated and neutral NH(3) is transported into the cytoplasm. Neutral NH(3) and charged H(+) are carried separately across the membrane on a unique two-lane pathway, before recombining to NH(4)(+) inside the cell. The sequence is that of Ammonium transporter AmtB (amtB) from Escherichia coli O157:H7.